A 779-amino-acid polypeptide reads, in one-letter code: Pleckstrin homology domain-containing family A member 4 (779 aa).

Residues 54-153 (PVHIRGWLHK…WLRALGRASR (100 aa)) enclose the PH domain. 3 disordered regions span residues 152-352 (SRAE…LPGP), 492-670 (AGLG…EGHR), and 691-764 (MTGG…LPQD). Ser164 bears the Phosphoserine mark. Basic and acidic residues predominate over residues 184–193 (SRGEEGRISE). The segment covering 315-332 (QHWSQEPRTQAHSGSPTY) has biased composition (polar residues). The segment covering 525 to 535 (PESLELSSPRS) has biased composition (low complexity). A compositionally biased stretch (basic and acidic residues) spans 536–551 (PETDWGRPPGGDKDLA). Ser559 carries the phosphoserine modification. Over residues 594-603 (QLERMRRNQE) the composition is skewed to basic and acidic residues. Residues 647–663 (LRSSGSWSSPRNTTPYL) show a composition bias toward polar residues. Positions 704–724 (PGVPLPPSDPTRQETPPPRSP) are enriched in pro residues.

In terms of tissue distribution, highly expressed in melanoma. Detected at low levels in heart, skeletal muscle, kidney, liver and small intestine.

Its subcellular location is the cytoplasm. The protein resides in the membrane. Its function is as follows. Binds specifically to phosphatidylinositol 3-phosphate (PtdIns3P), but not to other phosphoinositides. The polypeptide is Pleckstrin homology domain-containing family A member 4 (PLEKHA4) (Homo sapiens (Human)).